A 490-amino-acid chain; its full sequence is Glutamate--tRNA ligase (490 aa).

A 'HIGH' region motif is present at residues 13-23 (PSPTGTPHVGL). The 'KMSKS' region signature appears at 257–261 (KLSKR). Lys260 lines the ATP pocket.

It belongs to the class-I aminoacyl-tRNA synthetase family. Glutamate--tRNA ligase type 1 subfamily. In terms of assembly, monomer.

It is found in the cytoplasm. It catalyses the reaction tRNA(Glu) + L-glutamate + ATP = L-glutamyl-tRNA(Glu) + AMP + diphosphate. In terms of biological role, catalyzes the attachment of glutamate to tRNA(Glu) in a two-step reaction: glutamate is first activated by ATP to form Glu-AMP and then transferred to the acceptor end of tRNA(Glu). The protein is Glutamate--tRNA ligase of Mycobacterium tuberculosis (strain ATCC 25177 / H37Ra).